The primary structure comprises 135 residues: QECKCHGVSGSCTTKTCWTTLPKFRELGFIVKDKYKEAVQVEPVRASRNKRPTFLKIKKPLSYRKPMDTDLVYIEKSPNYCEEDPMTGSMGTQGRLCNKTAQHTSGCDLMCCGRGYNTHQYSRVWQFHWCCCNCK.

Disulfide bonds link Cys3–Cys17 and Cys5–Cys12. Ser9 is lipidated: O-palmitoleoyl serine; by PORCN. Residues 41-69 (VEPVRASRNKRPTFLKIKKPLSYRKPMDT) form a disordered linker region. Cystine bridges form between Cys81-Cys112, Cys97-Cys107, Cys111-Cys134, and Cys130-Cys131. The N-linked (GlcNAc...) asparagine glycan is linked to Asn98.

It belongs to the Wnt family. Post-translationally, palmitoleoylation is required for efficient binding to frizzled receptors. Depalmitoleoylation leads to Wnt signaling pathway inhibition. As to expression, in embryo, in brain and ventral neural tube; in adults, in brain.

The protein resides in the secreted. The protein localises to the extracellular space. It is found in the extracellular matrix. Ligand for members of the frizzled family of seven transmembrane receptors that functions in the canonical Wnt/beta-catenin signaling pathway. Plays an important role in embryonic development, including dorsal versus ventral patterning during limb development, skeleton development and urogenital tract development. Required for central nervous system (CNS) angiogenesis and blood-brain barrier regulation. The chain is Protein Wnt-7a (wnt7a) from Xenopus laevis (African clawed frog).